A 54-amino-acid polypeptide reads, in one-letter code: GNKVILSDGPNVFTGCKLTVHMQTGQAELESCGGRVQIQLDPKSQPNAQQQKQN.

This is an uncharacterized protein from Rhizobium etli.